A 399-amino-acid chain; its full sequence is CCA-adding enzyme (399 aa).

ATP-binding residues include glycine 28 and arginine 31. The CTP site is built by glycine 28 and arginine 31. Residues aspartate 41 and aspartate 43 each coordinate Mg(2+). Residues arginine 112, aspartate 155, arginine 158, arginine 161, and arginine 164 each coordinate ATP. Arginine 112, aspartate 155, arginine 158, arginine 161, and arginine 164 together coordinate CTP.

This sequence belongs to the tRNA nucleotidyltransferase/poly(A) polymerase family. Bacterial CCA-adding enzyme type 3 subfamily. Homodimer. It depends on Mg(2+) as a cofactor.

It carries out the reaction a tRNA precursor + 2 CTP + ATP = a tRNA with a 3' CCA end + 3 diphosphate. The enzyme catalyses a tRNA with a 3' CCA end + 2 CTP + ATP = a tRNA with a 3' CCACCA end + 3 diphosphate. Catalyzes the addition and repair of the essential 3'-terminal CCA sequence in tRNAs without using a nucleic acid template. Adds these three nucleotides in the order of C, C, and A to the tRNA nucleotide-73, using CTP and ATP as substrates and producing inorganic pyrophosphate. tRNA 3'-terminal CCA addition is required both for tRNA processing and repair. Also involved in tRNA surveillance by mediating tandem CCA addition to generate a CCACCA at the 3' terminus of unstable tRNAs. While stable tRNAs receive only 3'-terminal CCA, unstable tRNAs are marked with CCACCA and rapidly degraded. The sequence is that of CCA-adding enzyme from Staphylococcus saprophyticus subsp. saprophyticus (strain ATCC 15305 / DSM 20229 / NCIMB 8711 / NCTC 7292 / S-41).